A 197-amino-acid chain; its full sequence is Lactoylglutathione lyase-like protein terB (197 aa).

Positions 1–19 (MARFAVLQLLLPLAAGLTG) are cleaved as a signal peptide. N-linked (GlcNAc...) asparagine glycans are attached at residues Asn-82, Asn-99, and Asn-140.

It belongs to the glyoxalase I family.

Its function is as follows. Lactoylglutathione lyase-like protein; part of the gene cluster that mediates the biosynthesis of terrein, a fungal metabolite with ecological, antimicrobial, antiproliferative, and antioxidative activities. The first step in the pathway is performed by the polyketide synthase terA that produces 4-hydroxy-6-methylpyranon (4-HMP), orsellinic acid (OA), and 2,3-dehydro-6-hydroxymellein (2,3-dehydro-6-HM) by condensing acetyl-CoA with two, three, or four malonyl-CoA units, respectively. 4-HMP and OA are not pathway intermediates, but are rather shunt or side products. 2,3-dehydro-6-HM is further converted to 6-hydroxymellein (6-HM) by the 6-hydroxymellein synthase terB. The monooxygenases terC and terD, the multicopper oxidase terE and the Kelch-like protein terF are then involved in the transformation of 6-HM to terrein. Even if they are co-regulated with the other terrein cluster genes, terH and terI seem to be dispensable for terrein production; whereas one or both of the 2 transporters terG and terJ are probably required for efficient secretion of metabolites. This chain is Lactoylglutathione lyase-like protein terB, found in Aspergillus terreus (strain NIH 2624 / FGSC A1156).